Consider the following 309-residue polypeptide: Coenzyme PQQ synthesis protein B (309 aa).

The protein belongs to the PqqB family.

It participates in cofactor biosynthesis; pyrroloquinoline quinone biosynthesis. Functionally, may be involved in the transport of PQQ or its precursor to the periplasm. In Nitrosococcus oceani (strain ATCC 19707 / BCRC 17464 / JCM 30415 / NCIMB 11848 / C-107), this protein is Coenzyme PQQ synthesis protein B.